We begin with the raw amino-acid sequence, 289 residues long: MLHIKCKDTDLDPIPVKIGIIGGSGLDDPDILENRQEKVISTPYGEPSDALIQGEIGGVQCVLLARHGRKHDIMPSNVNYRANIWALRDVGCTHLIVSTACGSLREQIKPGNLVMPHDFIDRTTKRSQTFYDGSATSPRGVCHLPMYPAFSERTRNILIEAAKELEIPAHEKATIVTIEGPRFSSRSESLMFREWGGDLINMTTCPEVVLAKEAGLLYGSVAIATDYDCWRMGCEGVNVQDVLKTFAENVIKVKKILVNAVGRIAKEDWSEDILNAKQCVCNNTMSGAM.

Residues S24, 66–67 (RH), and 99–100 (TA) each bind phosphate. Residue M202 participates in substrate binding. Phosphate is bound at residue T203. 226–228 (DYD) provides a ligand contact to substrate.

Belongs to the PNP/MTAP phosphorylase family. MTAP subfamily. As to quaternary structure, homotrimer.

Its subcellular location is the cytoplasm. It is found in the nucleus. It catalyses the reaction S-methyl-5'-thioadenosine + phosphate = 5-(methylsulfanyl)-alpha-D-ribose 1-phosphate + adenine. It participates in amino-acid biosynthesis; L-methionine biosynthesis via salvage pathway; S-methyl-5-thio-alpha-D-ribose 1-phosphate from S-methyl-5'-thioadenosine (phosphorylase route): step 1/1. Functionally, catalyzes the reversible phosphorylation of S-methyl-5'-thioadenosine (MTA) to adenine and 5-methylthioribose-1-phosphate. Involved in the breakdown of MTA, a major by-product of polyamine biosynthesis. Responsible for the first step in the methionine salvage pathway after MTA has been generated from S-adenosylmethionine. Has broad substrate specificity with 6-aminopurine nucleosides as preferred substrates. This Drosophila pseudoobscura pseudoobscura (Fruit fly) protein is S-methyl-5'-thioadenosine phosphorylase.